The sequence spans 649 residues: DNA mismatch repair protein MutL (649 aa).

The protein belongs to the DNA mismatch repair MutL/HexB family.

This protein is involved in the repair of mismatches in DNA. It is required for dam-dependent methyl-directed DNA mismatch repair. May act as a 'molecular matchmaker', a protein that promotes the formation of a stable complex between two or more DNA-binding proteins in an ATP-dependent manner without itself being part of a final effector complex. The polypeptide is DNA mismatch repair protein MutL (Streptococcus pneumoniae (strain JJA)).